A 483-amino-acid polypeptide reads, in one-letter code: ATP synthase subunit beta (483 aa).

ATP is bound at residue 162-169; that stretch reads GGAGVGKT.

Belongs to the ATPase alpha/beta chains family. In terms of assembly, F-type ATPases have 2 components, CF(1) - the catalytic core - and CF(0) - the membrane proton channel. CF(1) has five subunits: alpha(3), beta(3), gamma(1), delta(1), epsilon(1). CF(0) has four main subunits: a(1), b(1), b'(1) and c(9-12).

Its subcellular location is the cellular thylakoid membrane. It catalyses the reaction ATP + H2O + 4 H(+)(in) = ADP + phosphate + 5 H(+)(out). Produces ATP from ADP in the presence of a proton gradient across the membrane. The catalytic sites are hosted primarily by the beta subunits. The protein is ATP synthase subunit beta of Prochloron didemni.